The chain runs to 273 residues: 2,3,4,5-tetrahydropyridine-2,6-dicarboxylate N-succinyltransferase (273 aa).

R104 and D141 together coordinate substrate.

Belongs to the transferase hexapeptide repeat family. Homotrimer.

Its subcellular location is the cytoplasm. The enzyme catalyses (S)-2,3,4,5-tetrahydrodipicolinate + succinyl-CoA + H2O = (S)-2-succinylamino-6-oxoheptanedioate + CoA. Its pathway is amino-acid biosynthesis; L-lysine biosynthesis via DAP pathway; LL-2,6-diaminopimelate from (S)-tetrahydrodipicolinate (succinylase route): step 1/3. This chain is 2,3,4,5-tetrahydropyridine-2,6-dicarboxylate N-succinyltransferase, found in Laribacter hongkongensis (strain HLHK9).